The chain runs to 800 residues: Phenylalanine--tRNA ligase beta subunit (800 aa).

The tRNA-binding domain occupies 39-154 (TKDIKKLVVG…EAVKPGTDAL (116 aa)). The B5 domain maps to 408–483 (SFVTPIKITA…RIYGYDDIPS (76 aa)). Mg(2+)-binding residues include aspartate 461, aspartate 467, glutamate 470, and glutamate 471. An FDX-ACB domain is found at 708-800 (PRFPGVTRDI…ALKKHGAIIR (93 aa)).

This sequence belongs to the phenylalanyl-tRNA synthetase beta subunit family. Type 1 subfamily. As to quaternary structure, tetramer of two alpha and two beta subunits. Requires Mg(2+) as cofactor.

The protein localises to the cytoplasm. The catalysed reaction is tRNA(Phe) + L-phenylalanine + ATP = L-phenylalanyl-tRNA(Phe) + AMP + diphosphate + H(+). The protein is Phenylalanine--tRNA ligase beta subunit of Staphylococcus epidermidis (strain ATCC 35984 / DSM 28319 / BCRC 17069 / CCUG 31568 / BM 3577 / RP62A).